The following is a 122-amino-acid chain: Proline-rich protein 15 (122 aa).

The segment at 1-122 (MADSGGSSPW…FPDDPQEDKQ (122 aa)) is disordered. S39 carries the phosphoserine modification. Positions 46–56 (TSSLPENQHSN) are enriched in polar residues. Over residues 63-76 (ESLRSDKLCEEKTG) the composition is skewed to basic and acidic residues. Over residues 80–97 (RNLKISRSGRFKEKRKMR) the composition is skewed to basic residues. The span at 110-122 (EADFPDDPQEDKQ) shows a compositional bias: acidic residues.

It belongs to the PRR15 family. In terms of tissue distribution, exhibits a cell type specific expression pattern only in the small and large intestine and in the testis. Along the intestinal tract expression is restricted to the non-proliferating epithelial cells surrounding the villi and no expression is found in the intestinal crypts, where proliferation occurs. In the testis, it is detected only in post-mitotic secondary spermatocytes.

In terms of biological role, may have a role in proliferation and/or differentiation. In Mus musculus (Mouse), this protein is Proline-rich protein 15 (Prr15).